The sequence spans 279 residues: MKILIMGAFGFLGSRLTSYFESRHTVIGLARKRNNEATINNIIYTTENNWIEKILEFEPNIIINTIACYGRHNEPATALIESNILMPIRVLESISSLDAVFINCGTSLPPNTSLYAYTKQKANELAAAIIDKVCGKYIELKLEHFYGAFDGDDKFTSMVIRRCLSNQPVKLTSGLQQRDFLYIKDLLTAFDCIISNVNNFPKFHSIEVGSGEAISIREYVDTVKNITKSNSIIEFGVVKERVNELMYSCADIAELEKIGWKREFSLVDALTEIIEEEGK.

Tyr-115 serves as the catalytic Proton acceptor.

It belongs to the NAD(P)-dependent epimerase/dehydratase family.

It carries out the reaction CDP-alpha-D-paratose + NADP(+) = CDP-4-dehydro-3,6-dideoxy-alpha-D-glucose + NADPH + H(+). The protein operates within nucleotide-sugar biosynthesis; CDP-3,6-dideoxy-D-mannose biosynthesis; CDP-3,6-dideoxy-D-mannose from CTP and alpha-D-glucose 1-phosphate: step 4/5. In terms of biological role, catalyzes synthesis of paratose and tyvelose, unusual 3,6-dideoxyhexose sugars that form part of the O-antigen in the lipopolysaccharides of several enteric bacteria. In Salmonella typhi, this protein is CDP-paratose synthase (rfbS).